The following is a 1072-amino-acid chain: Integrator complex subunit 3 homolog (1072 aa).

2 disordered regions span residues 920-941 and 1002-1072; these read YPSSSPNKRKRPPKGISVSTSI and DTTV…NDSD. A phosphoserine mark is found at serine 1042, serine 1043, serine 1047, and serine 1048.

This sequence belongs to the Integrator subunit 3 family. In terms of assembly, belongs to the multiprotein complex Integrator, at least composed of IntS1, IntS2, IntS3, IntS4, omd/IntS5, IntS6, defl/IntS7, IntS8, IntS9, IntS10, IntS11, IntS12, asun/IntS13, IntS14 and IntS15. The core complex associates with protein phosphatase 2A subunits mts/PP2A and Pp2A-29B, to form the Integrator-PP2A (INTAC) complex.

The protein localises to the nucleus. It is found in the cytoplasm. Its function is as follows. Component of the integrator complex, a multiprotein complex that terminates RNA polymerase II (Pol II) transcription in the promoter-proximal region of genes. The integrator complex provides a quality checkpoint during transcription elongation by driving premature transcription termination of transcripts that are unfavorably configured for transcriptional elongation: the complex terminates transcription by (1) catalyzing dephosphorylation of the C-terminal domain (CTD) of Pol II subunit Polr2A/Rbp1 and Spt5, and (2) degrading the exiting nascent RNA transcript via endonuclease activity. The integrator complex is also involved in the 3'-end processing of the U7 snRNA, and also the spliceosomal snRNAs U1, U2, U4 and U5. The sequence is that of Integrator complex subunit 3 homolog (IntS3) from Drosophila erecta (Fruit fly).